The following is a 139-amino-acid chain: Putative pre-16S rRNA nuclease (139 aa).

This sequence belongs to the YqgF nuclease family.

It localises to the cytoplasm. Could be a nuclease involved in processing of the 5'-end of pre-16S rRNA. This is Putative pre-16S rRNA nuclease from Proteus mirabilis (strain HI4320).